Here is a 464-residue protein sequence, read N- to C-terminus: Macrophage metalloelastase (464 aa).

The N-terminal stretch at 1 to 17 (MKFLLLILTLWVTSSGA) is a signal peptide. The propeptide at 18–100 (DPLKENDMLF…DVYHFKTMPG (83 aa)) is activation peptide. A glycan (N-linked (GlcNAc...) asparagine) is linked at Asn-69. The Cysteine switch motif lies at 85 to 92 (PRCGVPDV). Position 87 (Cys-87) interacts with Zn(2+). Positions 119 and 153 each coordinate Ca(2+). Zn(2+)-binding residues include His-163 and Asp-165. Asp-170, Gly-171, Gly-173, and Val-175 together coordinate Ca(2+). His-178 contributes to the Zn(2+) binding site. Positions 185, 187, and 189 each coordinate Ca(2+). His-191 provides a ligand contact to Zn(2+). 3 residues coordinate Ca(2+): Asp-193, Glu-194, and Glu-196. His-213 contacts Zn(2+). Residue Glu-214 is part of the active site. Positions 217 and 223 each coordinate Zn(2+). Hemopexin repeat units lie at residues 274–323 (PTAC…WPTL), 324–370 (PSGI…GFPD), 372–420 (VKKI…FPGI), and 421–464 (GPKI…WFDC). Residues Cys-277 and Cys-464 are joined by a disulfide bond. Ca(2+)-binding residues include Asp-284, Glu-328, Asp-376, and Asp-425.

Belongs to the peptidase M10A family. Requires Ca(2+) as cofactor. Zn(2+) serves as cofactor.

Its subcellular location is the secreted. The protein localises to the extracellular space. The protein resides in the extracellular matrix. It catalyses the reaction Hydrolysis of soluble and insoluble elastin. Specific cleavages are also produced at 14-Ala-|-Leu-15 and 16-Tyr-|-Leu-17 in the B chain of insulin.. Its function is as follows. May be involved in tissue injury and remodeling. Has significant elastolytic activity. Can accept large and small amino acids at the P1' site, but has a preference for leucine. Aromatic or hydrophobic residues are preferred at the P1 site, with small hydrophobic residues (preferably alanine) occupying P3. The protein is Macrophage metalloelastase (MMP12) of Oryctolagus cuniculus (Rabbit).